Reading from the N-terminus, the 456-residue chain is uncharacterized protein (456 aa).

A TRAM domain is found at 3-61 (TIKKNEVKTGKVIDLTHEGHGVVKVDRYPIFIPNALIDEEIKFKLIKVKKNFAIGKLIE). Residues Cys-74, Cys-80, Cys-83, and Cys-162 each coordinate [4Fe-4S] cluster. 4 residues coordinate S-adenosyl-L-methionine: Gln-286, Tyr-315, Glu-336, and Asp-384. Cys-411 (nucleophile) is an active-site residue.

This sequence belongs to the class I-like SAM-binding methyltransferase superfamily. RNA M5U methyltransferase family.

This is an uncharacterized protein from Staphylococcus epidermidis (strain ATCC 12228 / FDA PCI 1200).